Here is a 460-residue protein sequence, read N- to C-terminus: Serine/threonine-protein kinase UL13 (460 aa).

Positions 1–37 (MATRGRPGAKQVADHSVSDGGEQRRIPQKPPGPERCD) are disordered. Residues 12–25 (VADHSVSDGGEQRR) are compositionally biased toward basic and acidic residues. The region spanning 95-460 (LEPYRFLGRG…DVRRTVSALA (366 aa)) is the Protein kinase domain. ATP is bound by residues 101-109 (LGRGGYGSV) and lysine 120. Aspartate 219 (proton acceptor) is an active-site residue.

It belongs to the protein kinase superfamily. Ser/Thr protein kinase family. In terms of processing, autophosphorylated.

The protein resides in the virion tegument. It is found in the host nucleus. It carries out the reaction L-seryl-[protein] + ATP = O-phospho-L-seryl-[protein] + ADP + H(+). The catalysed reaction is L-threonyl-[protein] + ATP = O-phospho-L-threonyl-[protein] + ADP + H(+). In terms of biological role, multifunctional serine/threonine kinase that plays a role in several processes including egress of virus particles from the nucleus, modulation of the actin cytoskeleton and regulation of viral and cellular gene expression. Regulates the nuclear localization of viral envelopment factors UL34 and UL31 homologs, by phosphorylating the US3 kinase homolog, indicating a role in nuclear egress. Disrupts host nuclear lamins, including LMNA and LMNB1. Phosphorylates the viral Fc receptor composed of glycoproteins E (gE) and I (gI). Phosphorylation of glycoprotein E (gE) by UL13 homolog alters its subcellular localization, from the host early endosome to the plasma membrane. Participates in the transcriptional regulation of cellular and viral mRNAs mainly by phosphorylating the viral transcriptional regulator ICP22 homolog. This Amazona oratrix (yellow-headed parrot) protein is Serine/threonine-protein kinase UL13 (UL13).